Here is a 154-residue protein sequence, read N- to C-terminus: uncharacterized protein (154 aa).

The segment at 1–37 (MDNLKEKPLSYNINNNNLNNNNNNNNNNNNNNNNINN) is disordered. A compositionally biased stretch (low complexity) spans 12 to 37 (NINNNNLNNNNNNNNNNNNNNNNINN). Asn82 is a glycosylation site (N-linked (GlcNAc...) asparagine). Residues 116 to 136 (IIITTIVVLLMIAVSLGLILA) form a helical membrane-spanning segment. Asn149 carries an N-linked (GlcNAc...) asparagine glycan.

The protein resides in the membrane. This is an uncharacterized protein from Dictyostelium discoideum (Social amoeba).